The chain runs to 311 residues: Probable manganese-dependent inorganic pyrophosphatase (311 aa).

Residues His-9, Asp-13, Asp-15, Asp-77, His-99, and Asp-151 each coordinate Mn(2+).

This sequence belongs to the PPase class C family. The cofactor is Mn(2+).

The protein resides in the cytoplasm. The catalysed reaction is diphosphate + H2O = 2 phosphate + H(+). In Streptococcus equi subsp. zooepidemicus (strain MGCS10565), this protein is Probable manganese-dependent inorganic pyrophosphatase.